A 395-amino-acid chain; its full sequence is Carbamoyl phosphate synthase small chain (395 aa).

The interval 1–192 (MTYNLHPAIL…LQYKTDKMYG (192 aa)) is CPSase. L-glutamine-binding residues include Ser50, Gly244, and Gly246. Residues 196-383 (KIILIDFGVK…INLIKHFKQY (188 aa)) enclose the Glutamine amidotransferase type-1 domain. Catalysis depends on Cys273, which acts as the Nucleophile. L-glutamine is bound by residues Met274, Gln277, Asn313, Gly315, and Phe316. Residues His356 and Glu358 contribute to the active site.

It belongs to the CarA family. Composed of two chains; the small (or glutamine) chain promotes the hydrolysis of glutamine to ammonia, which is used by the large (or ammonia) chain to synthesize carbamoyl phosphate. Tetramer of heterodimers (alpha,beta)4.

The protein localises to the plastid. It localises to the chloroplast. It catalyses the reaction hydrogencarbonate + L-glutamine + 2 ATP + H2O = carbamoyl phosphate + L-glutamate + 2 ADP + phosphate + 2 H(+). The enzyme catalyses L-glutamine + H2O = L-glutamate + NH4(+). It functions in the pathway amino-acid biosynthesis; L-arginine biosynthesis; carbamoyl phosphate from bicarbonate: step 1/1. It participates in pyrimidine metabolism; UMP biosynthesis via de novo pathway; (S)-dihydroorotate from bicarbonate: step 1/3. Functionally, small subunit of the glutamine-dependent carbamoyl phosphate synthetase (CPSase). CPSase catalyzes the formation of carbamoyl phosphate from the ammonia moiety of glutamine, carbonate, and phosphate donated by ATP, constituting the first step of 2 biosynthetic pathways, one leading to arginine and/or urea and the other to pyrimidine nucleotides. The small subunit (glutamine amidotransferase) binds and cleaves glutamine to supply the large subunit with the substrate ammonia. This is Carbamoyl phosphate synthase small chain from Gracilaria tenuistipitata var. liui (Red alga).